We begin with the raw amino-acid sequence, 102 residues long: Integration host factor subunit beta (102 aa).

Residues 54-102 (HHRPARMGRNPKTGEPVALPAKYVPHFKPGKELRERVNSSRHQAPLRSQ) form a disordered region. The segment covering 82 to 91 (PGKELRERVN) has biased composition (basic and acidic residues). Over residues 93-102 (SRHQAPLRSQ) the composition is skewed to polar residues.

Belongs to the bacterial histone-like protein family. As to quaternary structure, heterodimer of an alpha and a beta chain.

In terms of biological role, this protein is one of the two subunits of integration host factor, a specific DNA-binding protein that functions in genetic recombination as well as in transcriptional and translational control. The chain is Integration host factor subunit beta from Halorhodospira halophila (strain DSM 244 / SL1) (Ectothiorhodospira halophila (strain DSM 244 / SL1)).